We begin with the raw amino-acid sequence, 100 residues long: Spleen trypsin inhibitor I (100 aa).

Positions 1–21 (MKMSRLCLSIALLVLLGTLAA) are cleaved as a signal peptide. The propeptide occupies 22 to 33 (STPGCDTSNQAK). The BPTI/Kunitz inhibitor domain occupies 40–90 (CLEPPYTGPCKAKMIRYFYNAKAGFCETFVYGGCKAKSNNFRSAEDCMRTC). Intrachain disulfides connect Cys-40–Cys-90, Cys-49–Cys-73, and Cys-65–Cys-86. Residue Leu-100 is a propeptide.

The protein localises to the secreted. The protein is Spleen trypsin inhibitor I of Bos taurus (Bovine).